The sequence spans 193 residues: MELCTRSTTIITHLPASFNGHGYLAGKSVDRISLPLQRNVASLVLQSRTLRCSRKFPGETVTEETSTGVNEFGVEDRDGVVVAAEEKNSNSEAPQAEDEETQALEFLNDIKLDSDKTYSILLYGSGAIVALYLTSAIVSSLEAIPLFPKLMEVVGLGYTLWFTTRYLLFKRNREELKTKVSEIKKQVLGSDSE.

Residues 1-51 (MELCTRSTTIITHLPASFNGHGYLAGKSVDRISLPLQRNVASLVLQSRTLR) constitute a chloroplast transit peptide. Over 52 to 117 (CSRKFPGETV…NDIKLDSDKT (66 aa)) the chain is Stromal. A helical membrane pass occupies residues 118–138 (YSILLYGSGAIVALYLTSAIV). Residues 139–142 (SSLE) are Lumenal-facing. A helical membrane pass occupies residues 143-163 (AIPLFPKLMEVVGLGYTLWFT). Residues 164–193 (TRYLLFKRNREELKTKVSEIKKQVLGSDSE) are Stromal-facing.

This sequence belongs to the CURT family. Homo- and heterodimers and trimers.

The protein resides in the plastid. It is found in the chloroplast thylakoid membrane. Determines thylakoid architecture by inducing membrane curvature. This is Protein CURVATURE THYLAKOID 1D, chloroplastic (CURT1D) from Arabidopsis thaliana (Mouse-ear cress).